The following is a 95-amino-acid chain: MSFKFEAEVRSAQGKGASRRLRHNGQVPAIIYGGKAEAVSIILDHDKVNNAQAHDAFYNEVLTIVVAGKEEQVKVQAIQRHPTKPKLVHLDFKRI.

The protein belongs to the bacterial ribosomal protein bL25 family. In terms of assembly, part of the 50S ribosomal subunit; part of the 5S rRNA/L5/L18/L25 subcomplex. Contacts the 5S rRNA. Binds to the 5S rRNA independently of L5 and L18.

This is one of the proteins that binds to the 5S RNA in the ribosome where it forms part of the central protuberance. This Glaesserella parasuis serovar 5 (strain SH0165) (Haemophilus parasuis) protein is Large ribosomal subunit protein bL25.